We begin with the raw amino-acid sequence, 815 residues long: Glycogen phosphorylase (815 aa).

Lysine 662 carries the post-translational modification N6-(pyridoxal phosphate)lysine.

It belongs to the glycogen phosphorylase family. It depends on pyridoxal 5'-phosphate as a cofactor.

It carries out the reaction [(1-&gt;4)-alpha-D-glucosyl](n) + phosphate = [(1-&gt;4)-alpha-D-glucosyl](n-1) + alpha-D-glucose 1-phosphate. Phosphorylase is an important allosteric enzyme in carbohydrate metabolism. Enzymes from different sources differ in their regulatory mechanisms and in their natural substrates. However, all known phosphorylases share catalytic and structural properties. The protein is Glycogen phosphorylase (glgP) of Shigella flexneri.